Here is a 216-residue protein sequence, read N- to C-terminus: Adenylate kinase (216 aa).

ATP is bound at residue glycine 10 to threonine 15. Positions serine 30–valine 59 are NMP. AMP-binding positions include threonine 31, arginine 36, lysine 57–valine 59, glycine 85–arginine 88, and glutamine 92. Positions glycine 126–aspartate 163 are LID. ATP is bound at residue arginine 127. Positions 130 and 133 each coordinate Zn(2+). Residue valine 136 to tyrosine 137 coordinates ATP. The Zn(2+) site is built by cysteine 150 and cysteine 153. AMP-binding residues include arginine 160 and arginine 172. Alanine 200 is an ATP binding site.

This sequence belongs to the adenylate kinase family. Monomer.

The protein resides in the cytoplasm. The enzyme catalyses AMP + ATP = 2 ADP. It participates in purine metabolism; AMP biosynthesis via salvage pathway; AMP from ADP: step 1/1. Its function is as follows. Catalyzes the reversible transfer of the terminal phosphate group between ATP and AMP. Plays an important role in cellular energy homeostasis and in adenine nucleotide metabolism. The polypeptide is Adenylate kinase (Rhizobium etli (strain CIAT 652)).